We begin with the raw amino-acid sequence, 505 residues long: DNA primase large subunit (505 aa).

An interdomain linker region spans residues 253-270; the sequence is LSHSYTGQDYSTQKNTGK. The tract at residues 266–503 is interacts with PRIM1; sequence KNTGKISLDQ…LEMDLEGLEE (238 aa). [4Fe-4S] cluster is bound by residues cysteine 287, cysteine 367, cysteine 384, and cysteine 424. Residues 300 to 442 form an RNA:DNA duplex binding region; the sequence is HLRHGGRMQY…NVDDCGFSLN (143 aa). Positions 463-486 are disordered; the sequence is KEISQPETPQHKPSTQKTRDAASA. Positions 467–478 are enriched in polar residues; it reads QPETPQHKPSTQ. Threonine 470 is subject to Phosphothreonine.

Belongs to the eukaryotic-type primase large subunit family. Heterodimer of a catalytic subunit PRIM1 and a regulatory subunit PRIM2, also known as the DNA primase complex. Interacts via (C-terminus) with PRIM1. Component of the alpha DNA polymerase complex (also known as the alpha DNA polymerase-primase complex) consisting of four subunits: the catalytic subunit POLA1, the regulatory subunit POLA2, and the primase complex subunits PRIM1 and PRIM2 respectively. Within the complex, POLA1 directly interacts with PRIM2. [4Fe-4S] cluster is required as a cofactor.

Functionally, regulatory subunit of the DNA primase complex and component of the DNA polymerase alpha complex (also known as the alpha DNA polymerase-primase complex) which play an essential role in the initiation of DNA synthesis. During the S phase of the cell cycle, the DNA polymerase alpha complex (composed of a catalytic subunit POLA1, an accessory subunit POLA2 and two primase subunits, the catalytic subunit PRIM1 and the regulatory subunit PRIM2) is recruited to DNA at the replicative forks via direct interactions with MCM10 and WDHD1. The primase subunit of the polymerase alpha complex initiates DNA synthesis by oligomerising short RNA primers on both leading and lagging strands. These primers are initially extended by the polymerase alpha catalytic subunit and subsequently transferred to polymerase delta and polymerase epsilon for processive synthesis on the lagging and leading strand, respectively. In the primase complex, both subunits are necessary for the initial di-nucleotide formation, but the extension of the primer depends only on the catalytic subunit. Binds RNA:DNA duplex and coordinates the catalytic activities of PRIM1 and POLA2 during primase-to-polymerase switch. The protein is DNA primase large subunit (Prim2) of Mus musculus (Mouse).